Consider the following 168-residue polypeptide: Photosystem I assembly protein Ycf3 (168 aa).

TPR repeat units follow at residues 35–68, 72–105, and 120–153; these read AFTY…EIDP, SYIL…NPFL, and GEQA…TPGN.

This sequence belongs to the Ycf3 family.

It localises to the plastid. The protein localises to the chloroplast thylakoid membrane. Essential for the assembly of the photosystem I (PSI) complex. May act as a chaperone-like factor to guide the assembly of the PSI subunits. The chain is Photosystem I assembly protein Ycf3 from Nicotiana sylvestris (Wood tobacco).